We begin with the raw amino-acid sequence, 200 residues long: Phospholipase A2 inhibitor 1 (200 aa).

An N-terminal signal peptide occupies residues 1–19 (MKSLHIICLLFIFVARGNS). Disulfide bonds link cysteine 22–cysteine 46, cysteine 25–cysteine 32, cysteine 39–cysteine 67, cysteine 73–cysteine 94, cysteine 95–cysteine 100, cysteine 118–cysteine 143, cysteine 136–cysteine 165, and cysteine 169–cysteine 191. Asparagine 176 carries N-linked (GlcNAc...) asparagine glycosylation.

It belongs to the CNF-like-inhibitor family. In terms of assembly, occurs as a mixture of oligomers. Tetrameric arrangement appears to be the predominant quaternary structure. In terms of processing, N-glycosylated. As to expression, expressed by the liver.

Its subcellular location is the secreted. Its function is as follows. Inhibits basic phospholipase A2 isozymes PLA-B, BP-I and BP-II. In Protobothrops flavoviridis (Habu), this protein is Phospholipase A2 inhibitor 1.